Here is a 150-residue protein sequence, read N- to C-terminus: MKVSRHAKILEIINSKDIDTQEELAEELKKMGMNVTQATVSRDIKELKLIKVLGNTGKYKYATINHTESYMSDKLINIFAQTVINVENIDKLIIIKAISGSAPAAAEAIDTLGFDGVAGTIAGDNTIFVMARTNEKAQEITMKLKKIITA.

It belongs to the ArgR family.

Its subcellular location is the cytoplasm. Its pathway is amino-acid biosynthesis; L-arginine biosynthesis [regulation]. Functionally, regulates arginine biosynthesis genes. The chain is Arginine repressor from Clostridium botulinum (strain ATCC 19397 / Type A).